The following is a 306-amino-acid chain: SPbeta prophage-derived uncharacterized protein YonG (306 aa).

In Bacillus subtilis (strain 168), this protein is SPbeta prophage-derived uncharacterized protein YonG (yonG).